A 183-amino-acid chain; its full sequence is Bifunctional protein PyrR (183 aa).

Residues 102–114 (VVLVDDVLYTGRT) carry the PRPP-binding motif.

Belongs to the purine/pyrimidine phosphoribosyltransferase family. PyrR subfamily. Homodimer and homohexamer; in equilibrium.

It carries out the reaction UMP + diphosphate = 5-phospho-alpha-D-ribose 1-diphosphate + uracil. In terms of biological role, regulates transcriptional attenuation of the pyrimidine nucleotide (pyr) operon by binding in a uridine-dependent manner to specific sites on pyr mRNA. This disrupts an antiterminator hairpin in the RNA and favors formation of a downstream transcription terminator, leading to a reduced expression of downstream genes. Its function is as follows. Also displays a weak uracil phosphoribosyltransferase activity which is not physiologically significant. The chain is Bifunctional protein PyrR from Listeria welshimeri serovar 6b (strain ATCC 35897 / DSM 20650 / CCUG 15529 / CIP 8149 / NCTC 11857 / SLCC 5334 / V8).